The following is a 217-amino-acid chain: Small ribosomal subunit protein uS3 (217 aa).

The KH type-2 domain maps to Ile38–Lys106.

Belongs to the universal ribosomal protein uS3 family. As to quaternary structure, part of the 30S ribosomal subunit. Forms a tight complex with proteins S10 and S14.

Its function is as follows. Binds the lower part of the 30S subunit head. Binds mRNA in the 70S ribosome, positioning it for translation. The protein is Small ribosomal subunit protein uS3 of Streptococcus uberis (strain ATCC BAA-854 / 0140J).